Reading from the N-terminus, the 193-residue chain is Holliday junction branch migration complex subunit RuvA (193 aa).

A domain I region spans residues 1–64 (MIGRIAGILL…EDAHLLYGFL (64 aa)). The interval 65–139 (TPQERTTFRE…GKLGADLGAL (75 aa)) is domain II. A flexible linker region spans residues 139-143 (LAGAA). The segment at 144-193 (SQSDHAADILNALVALGYSEKEGLAAIKNVPAGTGVSEGIKLALKALSKV) is domain III.

The protein belongs to the RuvA family. As to quaternary structure, homotetramer. Forms an RuvA(8)-RuvB(12)-Holliday junction (HJ) complex. HJ DNA is sandwiched between 2 RuvA tetramers; dsDNA enters through RuvA and exits via RuvB. An RuvB hexamer assembles on each DNA strand where it exits the tetramer. Each RuvB hexamer is contacted by two RuvA subunits (via domain III) on 2 adjacent RuvB subunits; this complex drives branch migration. In the full resolvosome a probable DNA-RuvA(4)-RuvB(12)-RuvC(2) complex forms which resolves the HJ.

Its subcellular location is the cytoplasm. Its function is as follows. The RuvA-RuvB-RuvC complex processes Holliday junction (HJ) DNA during genetic recombination and DNA repair, while the RuvA-RuvB complex plays an important role in the rescue of blocked DNA replication forks via replication fork reversal (RFR). RuvA specifically binds to HJ cruciform DNA, conferring on it an open structure. The RuvB hexamer acts as an ATP-dependent pump, pulling dsDNA into and through the RuvAB complex. HJ branch migration allows RuvC to scan DNA until it finds its consensus sequence, where it cleaves and resolves the cruciform DNA. The sequence is that of Holliday junction branch migration complex subunit RuvA from Burkholderia ambifaria (strain ATCC BAA-244 / DSM 16087 / CCUG 44356 / LMG 19182 / AMMD) (Burkholderia cepacia (strain AMMD)).